A 100-amino-acid chain; its full sequence is Vesicle-associated membrane protein 8 (100 aa).

The Cytoplasmic portion of the chain corresponds to 1-74 (MEASGSAGND…ARKFWWKNVK (74 aa)). Residues Ser-4 and Ser-17 each carry the phosphoserine modification. The v-SNARE coiled-coil homology domain occupies 11–71 (RVRNLQSEVE…QKVARKFWWK (61 aa)). 3 positions are modified to phosphothreonine: Thr-27, Thr-47, and Thr-53. Phosphoserine is present on Ser-54. A helical; Anchor for type IV membrane protein transmembrane segment spans residues 75-95 (MIVIICVIVLIILILIILFAT). Residues 96–100 (GTIPT) lie on the Vesicular side of the membrane.

Belongs to the synaptobrevin family. In terms of assembly, forms a SNARE complex composed of VAMP8, SNAP29 and STX17 involved in fusion of autophagosome with lysosome. Found in a number of SNARE complexes with NAPA, SNAP23, SNAP25, STX1A, STX4, STX7, STX8 and VTI1B. Interacts with PICALM. SNARE complex formation and binding by PICALM are mutually exclusive processes for VAMP8. Interacts with SBF2/MTMR13. Interacts with RAB21 (in GTP-bound form) in response to starvation; the interaction probably regulates VAMP8 endolysosomal trafficking. Interacts with STX17; this interaction is increased in the absence of TMEM39A. Interacts with TRIM6. Expressed (at protein level) at a high level in kidney, lung and spleen; at a lower level in testis, liver, brain and heart. Expressed in kidney and retinal pigment epithelium derived cell line.

The protein resides in the lysosome membrane. It is found in the late endosome membrane. It localises to the early endosome membrane. The protein localises to the midbody. Its subcellular location is the cell membrane. The protein resides in the zymogen granule membrane. In terms of biological role, SNAREs, soluble N-ethylmaleimide-sensitive factor-attachment protein receptors, are essential proteins for fusion of cellular membranes. SNAREs localized on opposing membranes assemble to form a trans-SNARE complex, an extended, parallel four alpha-helical bundle that drives membrane fusion. VAMP8 is a SNARE involved in autophagy through the direct control of autophagosome membrane fusion with the lysososome membrane via its interaction with the STX17-SNAP29 binary t-SNARE complex. Also required for dense-granule secretion in platelets. Also plays a role in regulated enzyme secretion in pancreatic acinar cells. Involved in the abscission of the midbody during cell division, which leads to completely separate daughter cells. Involved in the homotypic fusion of early and late endosomes. Also participates in the activation of type I interferon antiviral response through a TRIM6-dependent mechanism. This Rattus norvegicus (Rat) protein is Vesicle-associated membrane protein 8.